Consider the following 159-residue polypeptide: Protein Smg homolog (159 aa).

The protein belongs to the Smg family.

This chain is Protein Smg homolog, found in Vibrio campbellii (strain ATCC BAA-1116).